The chain runs to 633 residues: FAD-binding monooxygenase andJ (633 aa).

Residues 117 to 120 (TWYW), 129 to 130 (DT), and Tyr-135 each bind FAD. 127-129 (MCD) contributes to the NADP(+) binding site. NADP(+) is bound by residues 269 to 275 (TGASAVQ) and 292 to 293 (RT).

It belongs to the FAD-binding monooxygenase family. FAD is required as a cofactor.

It participates in secondary metabolite biosynthesis; terpenoid biosynthesis. FAD-binding monooxygenase; part of the gene cluster that mediates the biosynthesis of anditomin, a fungal meroterpenoid. The first step of the pathway is the synthesis of 3,5-dimethylorsellinic acid (DMOA) by the polyketide synthase andM. DMOA is then converted to the phthalide compound 5,7-dihydroxy-4,6-dimethylphthalide (DHDMP) by the cytochrome P450 monooxygenase andK, which is further prenylated by the prenyltransferase andD to yield farnesyl-DHDMP. Further epoxidation by the FAD-dependent monooxygenase andE leads to epoxyfarnesyl-DHDMP. The next step involves the terpene cyclase andB that converts epoxyfarnesyl-DHDMP into preandiloid A through opening of the epoxide ring followed by the cyclization of the farnesyl moiety. Preandiloid A is in turn oxidized at the C-3 hydroxyl group to yield preandiloid B by the dehydrogenase andC. The dioxygenase andA is solely responsible for the dehydrogenation of preandiloid B leading to the enone preandiloid C, as well as for the intriguing structural rearrangement to generate the bicyclo[2.2.2]octane core, transforming preandiloid C into andiconin. FAD-binding monooxygenase andJ then produces andilesin D which is reduced by dehydrogenase andI to yield andilesin A. Action of acetyltransferase andG followed by a spontaneous acetate elimination leads then to andilesin B, which is in turn substrate of the short chain dehydrogenase andH to yield andilesin C. Finally, the dioxygenase andF catalyzes the transformation of andilesin C to anditomin. The polypeptide is FAD-binding monooxygenase andJ (Emericella variicolor (Aspergillus stellatus)).